Here is an 803-residue protein sequence, read N- to C-terminus: E3 ubiquitin-protein ligase UHRF2 (803 aa).

A Ubiquitin-like domain is found at 1 to 78 (MWIQVRTIDG…IQLLVRPDSS (78 aa)). Polar residues-rich tracts occupy residues 79–96 (LPST…SSHN), 106–115 (GGSSSQPSTS), 167–181 (KNGS…NVNH), and 189–200 (KLDNVPSTSNSD). Disordered regions lie at residues 79–115 (LPST…PSTS) and 154–200 (RASD…SNSD). The segment at 118-312 (TCLIDPGFGL…VDEIFKIEKP (195 aa)) is required for interaction with histone H3. The segment at 195–289 (STSNSDSVAA…KEVRVKVFLG (95 aa)) is interaction with PCNP. The PHD-type zinc finger occupies 340-396 (DKTCHMCSCHKCGEKRDPNMQLLCDECNMAYHIYCLSPPLDKVPEEEYWYCPSCKTD). The segment at 415-645 (KMPSASTESR…LQYPAGYPSE (231 aa)) is methyl-CpG binding and interaction with HDAC1. Positions 449 to 613 (GPIPGIPVGS…FLVWRYLLRR (165 aa)) constitute a YDG domain. The interval 643–676 (PSEKEGKKTKGQSKKQGSEATKRPASDDECPGDS) is disordered. Residues 658-668 (QGSEATKRPAS) show a composition bias toward basic and acidic residues. Serine 668 is modified (phosphoserine). An RING-type zinc finger spans residues 734–773 (CVCCQELVYQPVTTECFHNVCKDCLQRSFKAQVFSCPACR).

As to quaternary structure, homodimer; disulfide-linked. Binds methylated CpG containing oligonucleotides. Interacts with H3; the interaction has a preference for the 'Lys-9' trimethylated form of H3 (H3K9me3). Interacts with PCNP. Interacts with HDAC1. Interacts directly with CCNE1; the interaction ubiquitinates CCNE1 and appears independent of CCNE1 phosphorylation. Interacts with CCND1; the interaction ubiquitinates CCND1 and appears independent of CCND1 phosphorylation. Interacts with p53/TP53 and RB1. Interacts with UBE2I. Interacts with ZNF618. Interacts with UHRF1. Interacts with FANCD2. Interacts with ATR. Interacts with PCNA. May be autoubiquitinated; which may lead to proteasomal degradation. Post-translationally, phosphorylated. Phosphorylation may be mediated by CDK2. In terms of processing, autosumoylated. Mostly detected in several tissues, including the thymus, spleen, lung, adrenal gland, and ovary. In addition, found in several tissues in the brain (cerebellum, hippocampus, and cerebral cortex).

Its subcellular location is the nucleus. The protein resides in the chromosome. The enzyme catalyses S-ubiquitinyl-[E2 ubiquitin-conjugating enzyme]-L-cysteine + [acceptor protein]-L-lysine = [E2 ubiquitin-conjugating enzyme]-L-cysteine + N(6)-ubiquitinyl-[acceptor protein]-L-lysine.. The protein operates within protein modification; protein ubiquitination. E3 ligase activity is robustly activated by 5-hydroxy-methylcytosine. Functionally, E3 ubiquitin ligase that plays important roles in DNA methylation, histone modifications, cell cycle and DNA repair. Acts as a specific reader for 5-hydroxymethylcytosine (5hmC) and thereby recruits various substrates to these sites to ubiquitinate them. This activity also allows the maintenance of 5mC levels at specific genomic loci and regulates neuron-related gene expression. Participates in cell cycle regulation by ubiquitinating cyclins CCND1 and CCNE1 and thus inducing G1 arrest. Also ubiquitinates PCNP leading to its degradation by the proteasome. Plays an active role in DNA damage repair by ubiquitinating p21/CDKN1A leading to its proteasomal degradation. Also promotes DNA repair by acting as an interstrand cross-links (ICLs) sensor. Mechanistically, cooperates with UHRF1 to ensure recruitment of FANCD2 to ICLs, leading to FANCD2 monoubiquitination and subsequent activation. Contributes to UV-induced DNA damage response by physically interacting with ATR in response to irradiation, thereby promoting ATR activation. The chain is E3 ubiquitin-protein ligase UHRF2 (Uhrf2) from Mus musculus (Mouse).